A 451-amino-acid chain; its full sequence is Gamma-aminobutyric acid receptor subunit alpha-2 (451 aa).

The signal sequence occupies residues 1-28; sequence MKTKLNIYNMQLLLFVFLVWDPARLVLA. Over 29–249 the chain is Extracellular; it reads NIQEDEAKNN…MTAHFHLKRK (221 aa). N-linked (GlcNAc...) asparagine glycosylation is present at N38. R94 lines the 4-aminobutanoate pocket. N138 carries N-linked (GlcNAc...) asparagine glycosylation. Position 157 (T157) interacts with 4-aminobutanoate. Cysteines 166 and 180 form a disulfide. A helical membrane pass occupies residues 250–270; sequence IGYFVIQTYLPCIMTVILSQV. Over 271 to 280 the chain is Cytoplasmic; sequence SFWLNRESVP. A helical transmembrane segment spans residues 281–300; the sequence is ARTVFGVTTVLTMTTLSISA. The Extracellular segment spans residues 301-311; it reads RNSLPKVAYAT. Residues 312–332 traverse the membrane as a helical segment; the sequence is AMDWFIAVCYAFVFSALIEFA. Residues 333 to 420 are Cytoplasmic-facing; that stretch reads TVNYFTKRGW…FNSVSKIDRM (88 aa). Residues 421–441 form a helical membrane-spanning segment; it reads SRIVFPVLFGTFNLVYWATYL. Residues 442–451 are Extracellular-facing; sequence NREPVLGVSP.

It belongs to the ligand-gated ion channel (TC 1.A.9) family. Gamma-aminobutyric acid receptor (TC 1.A.9.5) subfamily. GABRA2 sub-subfamily. Heteropentamer, formed by a combination of alpha (GABRA1-6), beta (GABRB1-3), gamma (GABRG1-3), delta (GABRD), epsilon (GABRE), rho (GABRR1-3), pi (GABRP) and theta (GABRQ) subunits, each subunit exhibiting distinct physiological and pharmacological properties. Interacts with UBQLN1. Interacts with KIF21B. Interacts with LHFPL4. Interacts with SHISA7; interaction leads to the regulation of GABA(A) receptor trafficking, channel deactivation kinetics and pharmacology. Post-translationally, glycosylated.

The protein resides in the postsynaptic cell membrane. It localises to the cell membrane. Its subcellular location is the cytoplasmic vesicle membrane. It is found in the cell projection. The protein localises to the dendrite. It catalyses the reaction chloride(in) = chloride(out). Its activity is regulated as follows. Activated by pentobarbital. Inhibited by the antagonist bicuculline. In terms of biological role, alpha subunit of the heteropentameric ligand-gated chloride channel gated by gamma-aminobutyric acid (GABA), a major inhibitory neurotransmitter in the brain. GABA-gated chloride channels, also named GABA(A) receptors (GABAAR), consist of five subunits arranged around a central pore and contain GABA active binding site(s) located at the alpha and beta subunit interface(s). When activated by GABA, GABAARs selectively allow the flow of chloride anions across the cell membrane down their electrochemical gradient. Chloride influx into the postsynaptic neuron following GABAAR opening decreases the neuron ability to generate a new action potential, thereby reducing nerve transmission. The alpha-2 subunit exhibits synaptogenic activity together with beta-2 and very little to no activity together with beta-3, the gamma-2 subunit being necessary but not sufficient to induce rapid synaptic contacts formation. The sequence is that of Gamma-aminobutyric acid receptor subunit alpha-2 (GABRA2) from Pongo abelii (Sumatran orangutan).